Consider the following 413-residue polypeptide: 2,3-bisphosphoglycerate-independent phosphoglycerate mutase (413 aa).

Belongs to the BPG-independent phosphoglycerate mutase family. A-PGAM subfamily.

The catalysed reaction is (2R)-2-phosphoglycerate = (2R)-3-phosphoglycerate. Its pathway is carbohydrate degradation; glycolysis; pyruvate from D-glyceraldehyde 3-phosphate: step 3/5. Its function is as follows. Catalyzes the interconversion of 2-phosphoglycerate and 3-phosphoglycerate. The sequence is that of 2,3-bisphosphoglycerate-independent phosphoglycerate mutase from Metallosphaera sedula (strain ATCC 51363 / DSM 5348 / JCM 9185 / NBRC 15509 / TH2).